Consider the following 492-residue polypeptide: MTLWINGDWVTGQGALRVKRNPVSGEVLWQGNDADAAQVGQACRAARAAFPRWARLSFGDRQVRVERFAGLLESNKAELTAIIARETGKPRWEAATEVTAMINKIAISIKAYHVRTGEQRSEMPDGAASLRHRPHGVLAVFGPYNFPGHLPNGHIVPALLAGNTIIFKPSELTPWSGDAVMRLWQQAGLPPGVLNLVQGGRETGQALSALEDLDGLLFTGSANTGYQLHRQLSGQPEKILALEMGGNNPLIIDEVADIDAAVHLTIQSAFVTAGQRCTCARRLFLKSGTQGDAFLARLVAVSQRLTPGTWDDEPQPFIGGLISEQAAQQVVTAWQELEAMGGRTLLAPRLLQAGTSLLTPGIIEMTGVTGLPDEEVFGPLLRVWRYDNFDEAIRMANNTRFGLSCGLVSPEREKFDQLLLEARAGIVNWNKPLTGAASTAPFGGIGASGNHRPSAWYAADYCAWPMASLESDSLTLPATLNPGLDFSDEVVR.

An NAD(+)-binding site is contributed by 220-225 (GSANTG). Active-site residues include E243 and C277.

This sequence belongs to the aldehyde dehydrogenase family. AstD subfamily.

It catalyses the reaction N-succinyl-L-glutamate 5-semialdehyde + NAD(+) + H2O = N-succinyl-L-glutamate + NADH + 2 H(+). The protein operates within amino-acid degradation; L-arginine degradation via AST pathway; L-glutamate and succinate from L-arginine: step 4/5. Functionally, catalyzes the NAD-dependent reduction of succinylglutamate semialdehyde into succinylglutamate. The protein is N-succinylglutamate 5-semialdehyde dehydrogenase of Escherichia coli (strain UTI89 / UPEC).